The sequence spans 153 residues: 6,7-dimethyl-8-ribityllumazine synthase (153 aa).

5-amino-6-(D-ribitylamino)uracil is bound by residues phenylalanine 22, 56 to 58 (AFE), and 80 to 82 (TVI). 85-86 (ST) lines the (2S)-2-hydroxy-3-oxobutyl phosphate pocket. The Proton donor role is filled by histidine 88. Phenylalanine 113 contacts 5-amino-6-(D-ribitylamino)uracil. (2S)-2-hydroxy-3-oxobutyl phosphate is bound at residue arginine 127.

It belongs to the DMRL synthase family. As to quaternary structure, forms an icosahedral capsid composed of 60 subunits, arranged as a dodecamer of pentamers.

It carries out the reaction (2S)-2-hydroxy-3-oxobutyl phosphate + 5-amino-6-(D-ribitylamino)uracil = 6,7-dimethyl-8-(1-D-ribityl)lumazine + phosphate + 2 H2O + H(+). It participates in cofactor biosynthesis; riboflavin biosynthesis; riboflavin from 2-hydroxy-3-oxobutyl phosphate and 5-amino-6-(D-ribitylamino)uracil: step 1/2. Its function is as follows. Catalyzes the formation of 6,7-dimethyl-8-ribityllumazine by condensation of 5-amino-6-(D-ribitylamino)uracil with 3,4-dihydroxy-2-butanone 4-phosphate. This is the penultimate step in the biosynthesis of riboflavin. The chain is 6,7-dimethyl-8-ribityllumazine synthase from Actinobacillus pleuropneumoniae (Haemophilus pleuropneumoniae).